A 284-amino-acid chain; its full sequence is Phospholipid phosphatase 1 (284 aa).

The Cytoplasmic segment spans residues 1–6 (MFDKTR). The PDZ-binding; involved in localization to the apical cell membrane signature appears at 5-7 (TRL). Residues 7-27 (LPYVALDVLCVLLAGLPFAIL) traverse the membrane as a helical segment. The Extracellular portion of the chain corresponds to 28–53 (TSRHTPFQRGVFCNDESIKYPYKEDT). A helical transmembrane segment spans residues 54–74 (IPYALLGGIIIPFSIIVIILG). At 75–94 (ETLSVYCNLLHSNSFIRNNY) the chain is on the cytoplasmic side. A helical transmembrane segment spans residues 95–115 (IATIYKAIGTFLFGAAASQSL). Topologically, residues 116 to 164 (TDIAKYSIGRLRPHFLDVCDPDWSKINCSDGYIEYYICRGNAERVKEGR) are extracellular. A phosphatase sequence motif I region spans residues 120-128 (KYSIGRLRP). Residue Asn-142 is glycosylated (N-linked (GlcNAc...) asparagine). A helical membrane pass occupies residues 165–185 (LSFYSGHSSFSMYCMLFVALY). Residues 168-171 (YSGH) are phosphatase sequence motif II. The active-site Proton donors is His-171. Topologically, residues 186–199 (LQARMKGDWARLLR) are cytoplasmic. The helical transmembrane segment at 200-220 (PTLQFGLVAVSIYVGLSRVSD) threads the bilayer. Residues 216 to 227 (SRVSDYKHHWSD) are phosphatase sequence motif III. Residues 221 to 229 (YKHHWSDVL) lie on the Extracellular side of the membrane. His-223 functions as the Nucleophile in the catalytic mechanism. The chain crosses the membrane as a helical span at residues 230 to 250 (TGLIQGALVAILVAVYVSDFF). The Cytoplasmic segment spans residues 251–284 (KERTSFKERKEEDSHTTLHETPTTGNHYPSNHQP). The interval 260–284 (KEEDSHTTLHETPTTGNHYPSNHQP) is disordered. Polar residues predominate over residues 269–284 (HETPTTGNHYPSNHQP).

This sequence belongs to the PA-phosphatase related phosphoesterase family. In terms of assembly, forms functional homodimers and homooligomers that are not required for substrate recognition and catalytic activity. Can also form heterooligomers with PLPP2 and PLPP3. In terms of processing, N-glycosylated. N-linked sugars are of the complex type. N-glycosylation is not required for the phosphatase activity. In terms of tissue distribution, widely expressed with highest expression found in prostate. Found to be down-regulated in colon adenocarcinomas. As to expression, predominant in kidney, lung, placenta and liver. Predominant in heart and pancreas.

It localises to the cell membrane. The protein localises to the apical cell membrane. It is found in the membrane raft. Its subcellular location is the membrane. The protein resides in the caveola. It carries out the reaction a 1,2-diacyl-sn-glycero-3-phosphate + H2O = a 1,2-diacyl-sn-glycerol + phosphate. The enzyme catalyses 1,2-dihexadecanoyl-sn-glycero-3-phosphate + H2O = 1,2-dihexadecanoyl-sn-glycerol + phosphate. It catalyses the reaction 1,2-di-(9Z-octadecenoyl)-sn-glycero-3-phosphate + H2O = 1,2-di-(9Z-octadecenoyl)-sn-glycerol + phosphate. The catalysed reaction is a monoacyl-sn-glycero-3-phosphate + H2O = a monoacylglycerol + phosphate. It carries out the reaction (9Z)-octadecenoyl-sn-glycero-3-phosphate + H2O = (9Z-octadecenoyl)-glycerol + phosphate. The enzyme catalyses a 1-acyl-sn-glycero-3-phosphate + H2O = a 1-acyl-sn-glycerol + phosphate. It catalyses the reaction 1-(9Z-octadecenoyl)-sn-glycero-3-phosphate + H2O = 1-(9Z-octadecenoyl)-sn-glycerol + phosphate. The catalysed reaction is a 1,2-diacyl-sn-glycerol 3-diphosphate + H2O = a 1,2-diacyl-sn-glycero-3-phosphate + phosphate + H(+). It carries out the reaction sphing-4-enine 1-phosphate + H2O = sphing-4-enine + phosphate. The enzyme catalyses an N-acylsphing-4-enine 1-phosphate + H2O = an N-acylsphing-4-enine + phosphate. It catalyses the reaction N-(octanoyl)-sphing-4-enine-1-phosphate + H2O = N-octanoylsphing-4-enine + phosphate. The catalysed reaction is N-(9Z-octadecenoyl)-ethanolamine phosphate + H2O = N-(9Z-octadecenoyl) ethanolamine + phosphate. It carries out the reaction 1-hexadecanoyl-2-(9Z-octadecenoyl)-sn-glycero-3-phosphate + H2O = 1-hexadecanoyl-2-(9Z-octadecenoyl)-sn-glycerol + phosphate. Its pathway is lipid metabolism; phospholipid metabolism. With respect to regulation, magnesium-independent phospholipid phosphatase. Insensitive to N-ethylmaleimide. Inhibited by sphingosine, zinc ions and modestly by propanolol. Inhibited by vanadate. Magnesium-independent phospholipid phosphatase of the plasma membrane that catalyzes the dephosphorylation of a variety of glycerolipid and sphingolipid phosphate esters including phosphatidate/PA, lysophosphatidate/LPA, diacylglycerol pyrophosphate/DGPP, sphingosine 1-phosphate/S1P and ceramide 1-phosphate/C1P. Also acts on N-oleoyl ethanolamine phosphate/N-(9Z-octadecenoyl)-ethanolamine phosphate, a potential physiological compound. Through its extracellular phosphatase activity allows both the hydrolysis and the cellular uptake of these bioactive lipid mediators from the milieu, regulating signal transduction in different cellular processes. It is for instance essential for the extracellular hydrolysis of S1P and subsequent conversion into intracellular S1P. Involved in the regulation of inflammation, platelets activation, cell proliferation and migration among other processes. May also have an intracellular activity to regulate phospholipid-mediated signaling pathways. In Homo sapiens (Human), this protein is Phospholipid phosphatase 1.